The chain runs to 601 residues: Glutamyl-tRNA(Gln) amidotransferase subunit B, mitochondrial (601 aa).

A mitochondrion-targeting transit peptide spans 1–52 (MLQQWLRQSPRAARVLRGSCCRGPQSGSLRHSPLPTAPHRCIRSLQTSATES).

Belongs to the GatB/GatE family. GatB subfamily. As to quaternary structure, subunit of the heterotrimeric GatCAB amidotransferase (AdT) complex, composed of A, B and C subunits.

The protein localises to the mitochondrion. It carries out the reaction L-glutamyl-tRNA(Gln) + L-glutamine + ATP + H2O = L-glutaminyl-tRNA(Gln) + L-glutamate + ADP + phosphate + H(+). Its function is as follows. Allows the formation of correctly charged Gln-tRNA(Gln) through the transamidation of misacylated Glu-tRNA(Gln) in the mitochondria. The reaction takes place in the presence of glutamine and ATP through an activated gamma-phospho-Glu-tRNA(Gln). The protein is Glutamyl-tRNA(Gln) amidotransferase subunit B, mitochondrial of Aspergillus fumigatus (strain ATCC MYA-4609 / CBS 101355 / FGSC A1100 / Af293) (Neosartorya fumigata).